We begin with the raw amino-acid sequence, 340 residues long: NADH-quinone oxidoreductase subunit H (340 aa).

Transmembrane regions (helical) follow at residues 3 to 23, 69 to 89, 102 to 122, 127 to 147, 154 to 174, 186 to 206, 248 to 268, 274 to 294, and 312 to 332; these read LVGM…LVYM, WAFF…WAVI, VVVM…VLAI, VYGI…LGAI, ISYE…AGSL, MPYW…VSML, ILVS…PLNI, IPGF…FIWV, and KVFL…LLWV.

Belongs to the complex I subunit 1 family. In terms of assembly, NDH-1 is composed of 14 different subunits. Subunits NuoA, H, J, K, L, M, N constitute the membrane sector of the complex.

The protein resides in the cell inner membrane. The enzyme catalyses a quinone + NADH + 5 H(+)(in) = a quinol + NAD(+) + 4 H(+)(out). NDH-1 shuttles electrons from NADH, via FMN and iron-sulfur (Fe-S) centers, to quinones in the respiratory chain. The immediate electron acceptor for the enzyme in this species is believed to be ubiquinone. Couples the redox reaction to proton translocation (for every two electrons transferred, four hydrogen ions are translocated across the cytoplasmic membrane), and thus conserves the redox energy in a proton gradient. This subunit may bind ubiquinone. The polypeptide is NADH-quinone oxidoreductase subunit H (Anaplasma phagocytophilum (strain HZ)).